Reading from the N-terminus, the 208-residue chain is Thiamine-phosphate synthase (208 aa).

4-amino-2-methyl-5-(diphosphooxymethyl)pyrimidine is bound by residues 37–39 (QVR) and N70. Mg(2+) contacts are provided by D71 and D90. Position 109 (T109) interacts with 4-amino-2-methyl-5-(diphosphooxymethyl)pyrimidine. 135 to 137 (TTS) is a 2-[(2R,5Z)-2-carboxy-4-methylthiazol-5(2H)-ylidene]ethyl phosphate binding site. K138 provides a ligand contact to 4-amino-2-methyl-5-(diphosphooxymethyl)pyrimidine. 2-[(2R,5Z)-2-carboxy-4-methylthiazol-5(2H)-ylidene]ethyl phosphate is bound at residue G166.

This sequence belongs to the thiamine-phosphate synthase family. It depends on Mg(2+) as a cofactor.

The enzyme catalyses 2-[(2R,5Z)-2-carboxy-4-methylthiazol-5(2H)-ylidene]ethyl phosphate + 4-amino-2-methyl-5-(diphosphooxymethyl)pyrimidine + 2 H(+) = thiamine phosphate + CO2 + diphosphate. The catalysed reaction is 2-(2-carboxy-4-methylthiazol-5-yl)ethyl phosphate + 4-amino-2-methyl-5-(diphosphooxymethyl)pyrimidine + 2 H(+) = thiamine phosphate + CO2 + diphosphate. It catalyses the reaction 4-methyl-5-(2-phosphooxyethyl)-thiazole + 4-amino-2-methyl-5-(diphosphooxymethyl)pyrimidine + H(+) = thiamine phosphate + diphosphate. It functions in the pathway cofactor biosynthesis; thiamine diphosphate biosynthesis; thiamine phosphate from 4-amino-2-methyl-5-diphosphomethylpyrimidine and 4-methyl-5-(2-phosphoethyl)-thiazole: step 1/1. Its function is as follows. Condenses 4-methyl-5-(beta-hydroxyethyl)thiazole monophosphate (THZ-P) and 2-methyl-4-amino-5-hydroxymethyl pyrimidine pyrophosphate (HMP-PP) to form thiamine monophosphate (TMP). This chain is Thiamine-phosphate synthase, found in Salinispora arenicola (strain CNS-205).